Consider the following 277-residue polypeptide: 4-hydroxy-tetrahydrodipicolinate reductase (277 aa).

9 to 14 (GATGRM) contributes to the NAD(+) binding site. Residue lysine 37 participates in NADP(+) binding. 75 to 77 (GTS) provides a ligand contact to NAD(+). Histidine 132 functions as the Proton donor/acceptor in the catalytic mechanism. Lysine 136 functions as the Proton donor in the catalytic mechanism. Position 142–143 (142–143 (GT)) interacts with (S)-2,3,4,5-tetrahydrodipicolinate. Disordered stretches follow at residues 154–173 (ARGA…ARGQ) and 247–277 (ERAA…VTSA). A compositionally biased stretch (low complexity) spans 250-265 (AQAAAGDAPSGPVDDG).

This sequence belongs to the DapB family.

The protein resides in the cytoplasm. The enzyme catalyses (S)-2,3,4,5-tetrahydrodipicolinate + NAD(+) + H2O = (2S,4S)-4-hydroxy-2,3,4,5-tetrahydrodipicolinate + NADH + H(+). It carries out the reaction (S)-2,3,4,5-tetrahydrodipicolinate + NADP(+) + H2O = (2S,4S)-4-hydroxy-2,3,4,5-tetrahydrodipicolinate + NADPH + H(+). It participates in amino-acid biosynthesis; L-lysine biosynthesis via DAP pathway; (S)-tetrahydrodipicolinate from L-aspartate: step 4/4. Functionally, catalyzes the conversion of 4-hydroxy-tetrahydrodipicolinate (HTPA) to tetrahydrodipicolinate. This chain is 4-hydroxy-tetrahydrodipicolinate reductase, found in Clavibacter michiganensis subsp. michiganensis (strain NCPPB 382).